We begin with the raw amino-acid sequence, 480 residues long: Cysteine--tRNA ligase (480 aa).

C31 serves as a coordination point for Zn(2+). The 'HIGH' region signature appears at 33–43; the sequence is PTVYDSSHIGH. Positions 211, 236, and 240 each coordinate Zn(2+). Positions 269-273 match the 'KMSKS' region motif; sequence KMSKS. K272 contributes to the ATP binding site.

It belongs to the class-I aminoacyl-tRNA synthetase family. Requires Zn(2+) as cofactor.

The catalysed reaction is tRNA(Cys) + L-cysteine + ATP = L-cysteinyl-tRNA(Cys) + AMP + diphosphate. In Encephalitozoon cuniculi (strain GB-M1) (Microsporidian parasite), this protein is Cysteine--tRNA ligase.